Here is a 324-residue protein sequence, read N- to C-terminus: Fructose-1,6-bisphosphatase class 1 (324 aa).

Positions 88, 107, 109, and 110 each coordinate Mg(2+). Substrate is bound by residues 110–113 (DGSS), Asn199, and Lys265. Glu271 lines the Mg(2+) pocket.

Belongs to the FBPase class 1 family. As to quaternary structure, homotetramer. Mg(2+) is required as a cofactor.

Its subcellular location is the cytoplasm. It catalyses the reaction beta-D-fructose 1,6-bisphosphate + H2O = beta-D-fructose 6-phosphate + phosphate. It functions in the pathway carbohydrate biosynthesis; gluconeogenesis. The polypeptide is Fructose-1,6-bisphosphatase class 1 (Neisseria gonorrhoeae (strain ATCC 700825 / FA 1090)).